The following is a 418-amino-acid chain: MFSHCEGYRIEGGVTDGETNWNNNFNQNNNNNDNNKVMASIYKQQFYGKPHKTFMSLSSPNGPILVCIKKVGNSSDDFYLLVCTEKGFEEVRANKDSLQKSKTTRSFLKMRPTSLNVITSVRPELTKVPLCKVTDKSIQEELVKVCEPEFNKVIKSALLYCKESQRDDNDMLKNISSNVSQEYNDFLNFLGEKVELKDFSKFNGGLDIKNNSHGTHSIYSQINDVEVMYHVATMLPFFPSDPKQSERRKLISLDRVVIIFNDGSKPMSPNCIKSKSTQIIILIQPIKNFVGNSKTTIGISNDENRVVGEQPSPSLTTTTTTTTTTSPTINSNSPTPSNKIKYRVSISNRDEVPNYGPPLPDPPIFEKDDSFRNFLYQKMVGGAASLRNTPAFTSKNSEKASALINVISKYSTKGMEQI.

The region spanning 142 to 407 is the Rap-GAP domain; sequence LVKVCEPEFN…EKASALINVI (266 aa). The disordered stretch occupies residues 304 to 339; it reads NRVVGEQPSPSLTTTTTTTTTTSPTINSNSPTPSNK. A compositionally biased stretch (low complexity) spans 311 to 338; the sequence is PSPSLTTTTTTTTTTSPTINSNSPTPSN.

Mediates the deactivation of rap1 during multicellular development and is required for normal morphogenesis. Also required for the correct patterning of specific subtypes of prestalk cells. The chain is RapA guanosine triphosphatase-activating protein B (rapgapB) from Dictyostelium discoideum (Social amoeba).